A 940-amino-acid polypeptide reads, in one-letter code: UvrABC system protein A (940 aa).

31-38 contacts ATP; that stretch reads GLSGSGKS. The C4-type zinc-finger motif lies at 252-279; that stretch reads CPHCGYSMQELEPRLFSFNNPAGACGTC. ABC transporter domains lie at 309–586 and 606–936; these read WDQK…PDSL and RDKN…RFLK. 639-646 lines the ATP pocket; sequence GVSGSGKS. The C4-type zinc finger occupies 739 to 765; it reads CEACQGDGVIKVEMHFLPDVYVPCDVC.

This sequence belongs to the ABC transporter superfamily. UvrA family. In terms of assembly, forms a heterotetramer with UvrB during the search for lesions.

It localises to the cytoplasm. The UvrABC repair system catalyzes the recognition and processing of DNA lesions. UvrA is an ATPase and a DNA-binding protein. A damage recognition complex composed of 2 UvrA and 2 UvrB subunits scans DNA for abnormalities. When the presence of a lesion has been verified by UvrB, the UvrA molecules dissociate. This chain is UvrABC system protein A, found in Vibrio vulnificus (strain CMCP6).